We begin with the raw amino-acid sequence, 433 residues long: Sulfhydrylase FUB7 (433 aa).

Lysine 211 carries the N6-(pyridoxal phosphate)lysine modification.

Belongs to the trans-sulfuration enzymes family. Requires pyridoxal 5'-phosphate as cofactor.

It functions in the pathway mycotoxin biosynthesis. Functionally, sulfhydrylase; part of the gene cluster that mediates the biosynthesis of fusaric acid, a mycotoxin with low to moderate toxicity to animals and humans, but with high phytotoxic properties. L-aspartate is suggested as fusaric acid amino acid precursor that is activated and further processed to O-acetyl-L-homoserine by cluster enzymes aspartate kinase FUB3 and homoserine O-acetyltransferase FUB5, as well as enzymes of the primary metabolism. The polyketide synthase (PKS) FUB1 generates the triketide trans-2-hexenal which is presumptively released by the hydrolase FUB4 and linked to the NRPS-bound amino acid precursor by NAD(P)-dependent dehydrogenase FUB6. FUB1, FUB4, and the non-canonical NRPS Fub8 may form an enzyme complex. Further processing of the NRPS-bound intermediate might be carried out by FUB6 and the sulfhydrylase FUB7, enabling a spontaneous electrocyclization to close the carbon backbone of fusaric acid. Dihydrofusaric acid is likely to be released via reduction by the thioester reductase (TR) domain of FUB8 whereupon the final oxidation to fusaric acid may (also) be performed by the FMN-dependent dehydrogenase FUB9. This chain is Sulfhydrylase FUB7, found in Fusarium oxysporum f. sp. lycopersici (strain 4287 / CBS 123668 / FGSC 9935 / NRRL 34936) (Fusarium vascular wilt of tomato).